The primary structure comprises 506 residues: NAD(P)H-quinone oxidoreductase subunit 2 (506 aa).

The next 13 membrane-spanning stretches (helical) occupy residues 14 to 34 (AIIP…VDLA), 42 to 62 (WAPI…ALQW), 79 to 99 (LAIA…LISW), 108 to 128 (PIGE…LLCG), 132 to 152 (LISI…LSGY), 167 to 187 (LLVG…LYGL), 206 to 226 (FITS…IAAV), 240 to 260 (PTPV…AFAI), 276 to 296 (LLFT…ALAQ), 302 to 322 (MLAY…VSGT), 330 to 350 (VLYL…VILF), 374 to 394 (LGLS…GFFG), and 409 to 429 (LLVI…ISVI).

Belongs to the complex I subunit 2 family. As to quaternary structure, NDH-1 can be composed of about 15 different subunits; different subcomplexes with different compositions have been identified which probably have different functions.

It is found in the cellular thylakoid membrane. The catalysed reaction is a plastoquinone + NADH + (n+1) H(+)(in) = a plastoquinol + NAD(+) + n H(+)(out). It catalyses the reaction a plastoquinone + NADPH + (n+1) H(+)(in) = a plastoquinol + NADP(+) + n H(+)(out). NDH-1 shuttles electrons from an unknown electron donor, via FMN and iron-sulfur (Fe-S) centers, to quinones in the respiratory and/or the photosynthetic chain. The immediate electron acceptor for the enzyme in this species is believed to be plastoquinone. Couples the redox reaction to proton translocation, and thus conserves the redox energy in a proton gradient. Cyanobacterial NDH-1 also plays a role in inorganic carbon-concentration. This chain is NAD(P)H-quinone oxidoreductase subunit 2, found in Prochlorococcus marinus (strain MIT 9312).